Reading from the N-terminus, the 910-residue chain is Protein translocase subunit SecA (910 aa).

ATP-binding positions include Gln87, 105-109, and Asp512; that span reads GEGKT. Composition is skewed to basic and acidic residues over residues 561–571, 841–853, and 880–890; these read RHESRRIDNQL, EEERRQQAEELAR, and TFEREARKVGR. 2 disordered regions span residues 561–584 and 835–910; these read RHESRRIDNQLRGRSGRQGDAGSS and EEVD…GKIN. Positions 894, 896, 905, and 906 each coordinate Zn(2+). Residues 900–910 show a composition bias toward basic residues; it reads KKYKQCHGKIN.

The protein belongs to the SecA family. As to quaternary structure, monomer and homodimer. Part of the essential Sec protein translocation apparatus which comprises SecA, SecYEG and auxiliary proteins SecDF-YajC and YidC. Zn(2+) is required as a cofactor.

It localises to the cell inner membrane. Its subcellular location is the cytoplasm. It catalyses the reaction ATP + H2O + cellular proteinSide 1 = ADP + phosphate + cellular proteinSide 2.. Functionally, part of the Sec protein translocase complex. Interacts with the SecYEG preprotein conducting channel. Has a central role in coupling the hydrolysis of ATP to the transfer of proteins into and across the cell membrane, serving both as a receptor for the preprotein-SecB complex and as an ATP-driven molecular motor driving the stepwise translocation of polypeptide chains across the membrane. In Photobacterium profundum (strain SS9), this protein is Protein translocase subunit SecA.